We begin with the raw amino-acid sequence, 1320 residues long: Myopalladin (1320 aa).

The segment at 1–522 (MQDDSIEAST…FTCTASNKYG (522 aa)) is interaction with CARP. Disordered regions lie at residues 19–68 (SYLA…AFLS), 84–145 (NYDP…SETQ), and 165–271 (FKSH…PPRF). Basic and acidic residues-rich tracts occupy residues 23–35 (ETRH…RSRA) and 87–106 (PLEK…DQMK). Position 101 is a phosphoserine (Ser-101). Residues 107 to 130 (HSPNLSFEPNFCQDNPRSPTSSKE) are compositionally biased toward polar residues. Ser-131 carries the phosphoserine modification. A compositionally biased stretch (basic residues) spans 168–182 (HSSKRIRPRACKNHK). Residues 186-201 (ESQNKVMQENSSSFSD) show a composition bias toward polar residues. Residues 218–239 (DTRDNEVNHALEQQEAKRREAE) show a composition bias toward basic and acidic residues. A coiled-coil region spans residues 219 to 248 (TRDNEVNHALEQQEAKRREAEQAASEAAGG). Low complexity predominate over residues 240–258 (QAASEAAGGDTTPGSSPSS). Thr-251 carries the post-translational modification Phosphothreonine. Ig-like domains follow at residues 269-359 (PRFT…IYIE) and 435-531 (PVFT…AQLH). Disulfide bonds link Cys-290-Cys-341 and Cys-456-Cys-515. Residues 554-655 (AAIEPQPSPP…VKEPPPVLAK (102 aa)) form a disordered region. The segment covering 559-575 (QPSPPHSEPPSVEQPPK) has biased composition (pro residues). Residue Ser-644 is modified to Phosphoserine. Residues 649–677 (PPPVLAKPKLDSTQLQQLHNQVLLEQHQL) are interaction with NEB. A Phosphoserine modification is found at Ser-759. Residues 763 to 805 (LLVSHPSVQTKSPGGLSIQNEPLPPGPTEPTPPPFTFSIPSGN) form a disordered region. Residues 768–782 (PSVQTKSPGGLSIQN) are compositionally biased toward polar residues. The segment covering 784–797 (PLPPGPTEPTPPPF) has biased composition (pro residues). Residues Ser-813, Ser-818, Ser-867, Ser-907, and Ser-928 each carry the phosphoserine modification. A disordered region spans residues 844-876 (NAMGLPRSAPSMPSQGLAKKNTKSPQPVNDDNI). Ig-like domains lie at 945–1029 (PIFD…GRIS), 1073–1162 (PHFL…LELS), and 1172–1262 (PVIL…ARLD). Positions 945 to 1320 (PIFDKRLKHF…SRSVVESDEL (376 aa)) are interaction with ACTN. A disulfide bridge links Cys-1094 with Cys-1146.

Belongs to the myotilin/palladin family. Interacts with TTN/titin, NEB, NEBL, ACTN2 and CARP. In terms of tissue distribution, expressed in adult skeletal muscle and fetal heart.

The protein localises to the cytoplasm. The protein resides in the nucleus. It localises to the myofibril. It is found in the sarcomere. Its subcellular location is the z line. Component of the sarcomere that tethers together nebulin (skeletal muscle) and nebulette (cardiac muscle) to alpha-actinin, at the Z lines. In Homo sapiens (Human), this protein is Myopalladin (MYPN).